The chain runs to 158 residues: Transcription elongation factor GreA (158 aa).

The protein belongs to the GreA/GreB family.

Necessary for efficient RNA polymerase transcription elongation past template-encoded arresting sites. The arresting sites in DNA have the property of trapping a certain fraction of elongating RNA polymerases that pass through, resulting in locked ternary complexes. Cleavage of the nascent transcript by cleavage factors such as GreA or GreB allows the resumption of elongation from the new 3'terminus. GreA releases sequences of 2 to 3 nucleotides. In Psychrobacter cryohalolentis (strain ATCC BAA-1226 / DSM 17306 / VKM B-2378 / K5), this protein is Transcription elongation factor GreA.